Consider the following 525-residue polypeptide: Matrix extracellular phosphoglycoprotein (525 aa).

An N-terminal signal peptide occupies residues 1 to 17 (MRVFCVGLLLFSVTWAA). Disordered regions lie at residues 24 to 95 (TEKT…NRQR), 187 to 216 (AKAH…THRI), and 237 to 525 (EGSG…SDGD). Composition is skewed to basic and acidic residues over residues 25 to 46 (EKTK…DNIG) and 64 to 73 (IVQERKKDLS). Composition is skewed to polar residues over residues 75–95 (SEAS…NRQR) and 200–210 (DSQAQKSPVKS). The interval 242–264 (TDLQERGDNDISPFSGDGQPFKD) is dentonin. The Cell attachment site signature appears at 247–249 (RGD). A glycan (O-linked (Xyl...) (chondroitin sulfate) serine) is linked at serine 256. Composition is skewed to basic and acidic residues over residues 292-312 (ESTH…REEN) and 319-328 (TRDETAKEAD). 2 N-linked (GlcNAc...) asparagine glycosylation sites follow: asparagine 477 and asparagine 478. Positions 507–525 (RDDSSESSDSGSSSESDGD) are ASARM motif; interaction with PHEX. Positions 513 to 525 (SSDSGSSSESDGD) are enriched in low complexity.

The protein belongs to the PF07175/osteoregulin family. Interacts (via the ASARM motif) with PHEX; the interaction is zinc-dependent. In terms of processing, phosphorylated on serine residues in the ASARM motif (in vitro) by FAM20C; the phosphorylation is important for the inhibition of bone mineralization. Post-translationally, cleaved by CTSB/cathepsin B; the cleavage is blocked by metalloprotease PHEX. In terms of tissue distribution, detected in urine (at protein level). Expressed by osteoblasts. Expressed by stem cells in dental pulp. Expressed by mesenchymal cells in dental papilla and dental pulp. Expressed in teeth, specifically in decidious dentin. Expressed in ondotoblasts. Expressed in salivary glands. Secreted from oncogenic hypophosphatemic tumors.

The protein localises to the secreted. The protein resides in the extracellular space. It is found in the extracellular matrix. In terms of biological role, promotes renal phosphate excretion and inhibits intestinal phosphate absorption. Promotes bone mineralization by osteoblasts and cartilage mineralization by chondrocytes. Regulates the mineralization of the extracellular matrix of the craniofacial complex, such as teeth, bone and cartilage. Promotes dental pulp stem cell proliferation and differentiation. This is Matrix extracellular phosphoglycoprotein (MEPE) from Homo sapiens (Human).